A 297-amino-acid polypeptide reads, in one-letter code: Internalin C (297 aa).

Residues 1–34 (MLKKNNWLQNAVIAMLVLIVGLCINMGSGTKVQA) form the signal peptide. LRR repeat units follow at residues 74 to 96 (LSGVQNFNGDNSNIQSLAGMQFF), 97 to 120 (TNLKELHLSHNQISDLSPLKDLTK), 122 to 139 (EELSVNRNRLKNLNGIPS), 140 to 161 (ACLSRLFLDNNELRDTDSLIHL), 162 to 184 (KNLEILSIRNNKLKSIVMLGFLS), and 186 to 207 (LEVLDLHGNEITNTGGLTRLKK).

This sequence belongs to the internalin family. As to quaternary structure, interacts in vitro with human intestinal mucin-2 (MUC2) but not with mucin-1; binding is slightly better at pH 5.5, (the pH of the intestine) than at pH 7.4. Interacts with the SH3 6 domain of human DNMBP (Tuba). Interacts with I-kappa-B kinase alpha (IKKA, CHUK).

The protein resides in the secreted. The protein localises to the host cytoplasm. A virulence enhancer that has at least 2 dissociable functions in infection; it impairs translocation of host transcription factor NF-kappa-B to the nucleus and antagonizes the function of the Tuba dynamin-binding protein, promoting bacterial spreading. Perturbs the morphology of host cell junctions by impairing host DNMBP (Tuba) and WASL interaction, altering cortical tension at the cell junctions and allowing bacteria to more efficiently form bacteria-filled cell protrusions which promote bacterial spreading within infected host tissue. Down-regulates the host inflammation response usually induced by Listeria infection. Interacts with host I-kappa-B kinase alpha (IKKA, CHUK), which prevents IKKA from phosphorylating NF-kappa-B inhibitor alpha (IKBA, NFKBIA) and thus delays degradation of phospho-IKBA. Translocation of host transcription factor p65 (a subunit of NF-kappa-B, RELA) into the nucleus is impaired, which prevents activation of NF-KB-regulated genes. Recognized by serum from healthy humans exposed to L.monocytogenes as well from patients who have recovered from listeriosis. The protein is Internalin C of Listeria monocytogenes serotype 1/2a (strain EGD / Mackaness).